The following is a 135-amino-acid chain: Large-conductance mechanosensitive channel (135 aa).

2 consecutive transmembrane segments (helical) span residues 9-29 (AFAARGNVIDMAVGIIIGAAF) and 79-99 (IQTIIDFLIISFAIFMGLKAI).

Belongs to the MscL family. Homopentamer.

The protein localises to the cell inner membrane. In terms of biological role, channel that opens in response to stretch forces in the membrane lipid bilayer. May participate in the regulation of osmotic pressure changes within the cell. The polypeptide is Large-conductance mechanosensitive channel (Aeromonas salmonicida (strain A449)).